A 271-amino-acid chain; its full sequence is Coiled-coil domain-containing protein ORF29 (271 aa).

The interval 1–39 is disordered; sequence MNEKTESEIFEEQNSLYKPIKQEKKTPSTPESEDKNDQS. Over residues 20–37 the composition is skewed to basic and acidic residues; sequence IKQEKKTPSTPESEDKND. A coiled-coil region spans residues 208 to 228; the sequence is RATQTQEILLNSLRKNLQMLE.

The sequence is that of Coiled-coil domain-containing protein ORF29 from Helicobacter pylori (strain 35A).